Here is a 272-residue protein sequence, read N- to C-terminus: Anamorsin homolog (272 aa).

The N-terminal SAM-like domain stretch occupies residues 1-156 (MDSMMNQKTV…KIGSSFALKK (156 aa)). Residues 157 to 185 (PVTNLFKIDLDDDVDLIDEDSLLTEEDLM) are linker. Residues Cys-195, Cys-202, Cys-205, and Cys-207 each coordinate [2Fe-2S] cluster. Positions 195 to 207 (CETTKKACKNCVC) are fe-S binding site A. Cys-233, Cys-236, Cys-244, and Cys-247 together coordinate [4Fe-4S] cluster. 2 consecutive short sequence motifs (cx2C motif) follow at residues 233–236 (CGSC) and 244–247 (CGTC). Residues 233 to 247 (CGSCGLGDAFRCGTC) are fe-S binding site B.

Belongs to the anamorsin family. As to quaternary structure, monomer. Interacts with ATR3. [2Fe-2S] cluster serves as cofactor. Requires [4Fe-4S] cluster as cofactor.

It localises to the cytoplasm. The protein localises to the mitochondrion intermembrane space. Component of the cytosolic iron-sulfur (Fe-S) protein assembly (CIA) machinery. Required for the maturation of extramitochondrial Fe-S proteins. Part of an electron transfer chain functioning in an early step of cytosolic Fe-S biogenesis, facilitating the de novo assembly of a [4Fe-4S] cluster on the cytosolic Fe-S scaffold complex. Electrons are transferred from NADPH via FAD- and FMN-containing diflavin oxidoreductase TAH18/ATR3. Together with the diflavin oxidoreductase, also required for the assembly of the diferric tyrosyl radical cofactor of ribonucleotide reductase (RNR), probably by providing electrons for reduction during radical cofactor maturation in the catalytic small subunit. Required for embryo development. This Arabidopsis thaliana (Mouse-ear cress) protein is Anamorsin homolog.